The primary structure comprises 158 residues: Ribonuclease H (158 aa).

In terms of domain architecture, RNase H type-1 spans 5-146; it reads MRKQIEIFTD…CDQLAKQGAE (142 aa). Positions 14, 52, 74, and 138 each coordinate Mg(2+).

This sequence belongs to the RNase H family. In terms of assembly, monomer. The cofactor is Mg(2+).

The protein localises to the cytoplasm. The catalysed reaction is Endonucleolytic cleavage to 5'-phosphomonoester.. Functionally, endonuclease that specifically degrades the RNA of RNA-DNA hybrids. The polypeptide is Ribonuclease H (Mannheimia succiniciproducens (strain KCTC 0769BP / MBEL55E)).